The sequence spans 682 residues: Glutamine--fructose-6-phosphate aminotransferase [isomerizing] 2 (682 aa).

C2 functions as the For GATase activity in the catalytic mechanism. The 287-residue stretch at 2-288 folds into the Glutamine amidotransferase type-2 domain; that stretch reads CGIFAYMNYR…DDDIAAVADG (287 aa). A Phosphoserine modification is found at S244. SIS domains follow at residues 360 to 499 and 531 to 672; these read HLKE…DRIS and LALE…VDFP. Substrate contacts are provided by residues 377-378, 422-424, T427, and H578; these read TS and SQS.

It carries out the reaction D-fructose 6-phosphate + L-glutamine = D-glucosamine 6-phosphate + L-glutamate. It functions in the pathway nucleotide-sugar biosynthesis; UDP-N-acetyl-alpha-D-glucosamine biosynthesis; alpha-D-glucosamine 6-phosphate from D-fructose 6-phosphate: step 1/1. Functionally, controls the flux of glucose into the hexosamine pathway. Most likely involved in regulating the availability of precursors for N- and O-linked glycosylation of proteins. The protein is Glutamine--fructose-6-phosphate aminotransferase [isomerizing] 2 (GFPT2) of Bos taurus (Bovine).